The primary structure comprises 442 residues: ATP-dependent protease ATPase subunit HslU (442 aa).

ATP contacts are provided by residues Ile18 and 60–65; that span reads GVGKTE. The segment at 136 to 156 is disordered; the sequence is LPKPKNDWDSTDSDANSNTRQ. The ATP site is built by Asp255, Glu320, and Arg392.

The protein belongs to the ClpX chaperone family. HslU subfamily. As to quaternary structure, a double ring-shaped homohexamer of HslV is capped on each side by a ring-shaped HslU homohexamer. The assembly of the HslU/HslV complex is dependent on binding of ATP.

Its subcellular location is the cytoplasm. In terms of biological role, ATPase subunit of a proteasome-like degradation complex; this subunit has chaperone activity. The binding of ATP and its subsequent hydrolysis by HslU are essential for unfolding of protein substrates subsequently hydrolyzed by HslV. HslU recognizes the N-terminal part of its protein substrates and unfolds these before they are guided to HslV for hydrolysis. This chain is ATP-dependent protease ATPase subunit HslU, found in Shewanella sp. (strain MR-7).